We begin with the raw amino-acid sequence, 452 residues long: MKLPVVAIIGRPNVGKSTLVNRIAGDQQAIVFDQPGITRDRTYQPAFWCDRDFQIVDTGGLVFNDDSEFLPLIREQALIALAEASVAIFVVDGQGGITAGDREIAAWLRQQNVPILLAVNKCESVEQGILQATEFWELAIGEPFPISAIHGSGTGELLDAVIKYLPPAAEIPENEEIKVAIIGRPNVGKSSLLNALTGQQRAIVSPISGTTRDSIDTLIEREGQVYRLIDTAGIRRKKNVDYGAEFFSINRAFKAIRRSDVVLFVIDVLDGVTEQDLKLAGRIIEEGRAVVLVVNKWDAVEKDTYTINTYTKMLQDRLYFMDWAEMIFVSAMTGQRVTKILELVDIAAESHRRRVSTSVINDVIEEAVKWHNPPTTRGGKQGKLYYGTQVSSQPPTIALFVNDPQRFNDNYRRYIEGQFRQQLGFKGTPIRLIWRGKPAREVEKTVNRATKV.

EngA-type G domains follow at residues 4–169 (PVVA…PPAA) and 177–352 (IKVA…ESHR). Residues 10 to 17 (GRPNVGKS), 57 to 61 (DTGGL), 120 to 123 (NKCE), 183 to 190 (GRPNVGKS), 230 to 234 (DTAGI), and 295 to 298 (NKWD) each bind GTP. The KH-like domain maps to 353–438 (RRVSTSVIND…PIRLIWRGKP (86 aa)).

This sequence belongs to the TRAFAC class TrmE-Era-EngA-EngB-Septin-like GTPase superfamily. EngA (Der) GTPase family. As to quaternary structure, associates with the 50S ribosomal subunit.

Functionally, GTPase that plays an essential role in the late steps of ribosome biogenesis. The chain is GTPase Der from Microcystis aeruginosa (strain NIES-843 / IAM M-2473).